Consider the following 845-residue polypeptide: Protein arginine N-methyltransferase 9 (845 aa).

TPR repeat units lie at residues 25 to 58, 67 to 100, and 101 to 134; these read VSRS…APEL, QYTL…FPDD, and EVIC…NPDF. 2 SAM-dependent MTase PRMT-type domains span residues 137 to 466 and 530 to 845; these read AKEN…YLRI and NIPY…TVKQ.

The protein belongs to the class I-like SAM-binding methyltransferase superfamily. Protein arginine N-methyltransferase family. Found in a complex with PRMT9, SF3B2 and SF3B4. Interacts with SF3B2.

It is found in the cytoplasm. The enzyme catalyses L-arginyl-[protein] + 2 S-adenosyl-L-methionine = N(omega),N(omega)'-dimethyl-L-arginyl-[protein] + 2 S-adenosyl-L-homocysteine + 2 H(+). Functionally, arginine methyltransferase that can both catalyze the formation of omega-N monomethylarginine (MMA) and symmetrical dimethylarginine (sDMA). Specifically mediates the symmetrical dimethylation of SF3B2. Involved in the regulation of alternative splicing of pre-mRNA. The chain is Protein arginine N-methyltransferase 9 from Homo sapiens (Human).